Reading from the N-terminus, the 322-residue chain is Phosphatidylserine decarboxylase proenzyme (322 aa).

Catalysis depends on charge relay system; for autoendoproteolytic cleavage activity residues Asp90, His147, and Ser254. Ser254 acts as the Schiff-base intermediate with substrate; via pyruvic acid; for decarboxylase activity in catalysis. Residue Ser254 is modified to Pyruvic acid (Ser); by autocatalysis. Positions 297–322 (PAPLPAEEIKAEHDASPLVDNKKDDT) are disordered. The segment covering 303 to 322 (EEIKAEHDASPLVDNKKDDT) has biased composition (basic and acidic residues).

Belongs to the phosphatidylserine decarboxylase family. PSD-B subfamily. Prokaryotic type I sub-subfamily. In terms of assembly, heterodimer of a large membrane-associated beta subunit and a small pyruvoyl-containing alpha subunit. Requires pyruvate as cofactor. Is synthesized initially as an inactive proenzyme. Formation of the active enzyme involves a self-maturation process in which the active site pyruvoyl group is generated from an internal serine residue via an autocatalytic post-translational modification. Two non-identical subunits are generated from the proenzyme in this reaction, and the pyruvate is formed at the N-terminus of the alpha chain, which is derived from the carboxyl end of the proenzyme. The autoendoproteolytic cleavage occurs by a canonical serine protease mechanism, in which the side chain hydroxyl group of the serine supplies its oxygen atom to form the C-terminus of the beta chain, while the remainder of the serine residue undergoes an oxidative deamination to produce ammonia and the pyruvoyl prosthetic group on the alpha chain. During this reaction, the Ser that is part of the protease active site of the proenzyme becomes the pyruvoyl prosthetic group, which constitutes an essential element of the active site of the mature decarboxylase.

The protein localises to the cell membrane. It carries out the reaction a 1,2-diacyl-sn-glycero-3-phospho-L-serine + H(+) = a 1,2-diacyl-sn-glycero-3-phosphoethanolamine + CO2. The protein operates within phospholipid metabolism; phosphatidylethanolamine biosynthesis; phosphatidylethanolamine from CDP-diacylglycerol: step 2/2. In terms of biological role, catalyzes the formation of phosphatidylethanolamine (PtdEtn) from phosphatidylserine (PtdSer). The protein is Phosphatidylserine decarboxylase proenzyme of Salmonella typhi.